A 292-amino-acid chain; its full sequence is Mycothiol acetyltransferase (292 aa).

N-acetyltransferase domains follow at residues 13 to 168 and 159 to 292; these read ALDR…KWLQ and KSVA…VYEK. Glu40 contacts 1D-myo-inositol 2-(L-cysteinylamino)-2-deoxy-alpha-D-glucopyranoside. 77–79 is a binding site for acetyl-CoA; the sequence is LAV. 1D-myo-inositol 2-(L-cysteinylamino)-2-deoxy-alpha-D-glucopyranoside is bound by residues Glu179, Lys218, and Glu226. Residues 230–232 and 237–243 contribute to the acetyl-CoA site; these read VGL and RGRGLGD. Tyr264 contacts 1D-myo-inositol 2-(L-cysteinylamino)-2-deoxy-alpha-D-glucopyranoside.

Belongs to the acetyltransferase family. MshD subfamily. As to quaternary structure, monomer.

It catalyses the reaction 1D-myo-inositol 2-(L-cysteinylamino)-2-deoxy-alpha-D-glucopyranoside + acetyl-CoA = mycothiol + CoA + H(+). Catalyzes the transfer of acetyl from acetyl-CoA to desacetylmycothiol (Cys-GlcN-Ins) to form mycothiol. The protein is Mycothiol acetyltransferase of Corynebacterium glutamicum (strain R).